The sequence spans 30 residues: Large ribosomal subunit protein bL25 (30 aa).

The protein belongs to the bacterial ribosomal protein bL25 family. In terms of assembly, part of the 50S ribosomal subunit; part of the 5S rRNA/L5/L18/L25 subcomplex. Contacts the 5S rRNA. Binds to the 5S rRNA independently of L5 and L18.

Its function is as follows. This is one of the proteins that binds to the 5S RNA in the ribosome where it forms part of the central protuberance. The chain is Large ribosomal subunit protein bL25 (rplY) from Anabaena variabilis.